Consider the following 73-residue polypeptide: Putative defensin-like protein 277 (73 aa).

A signal peptide spans 1 to 24; the sequence is MSAQKIYLASLLLFICLVFPQSTA. 4 disulfide bridges follow: C27-C64, C33-C52, C39-C62, and C43-C63.

The protein belongs to the DEFL family.

It is found in the secreted. The sequence is that of Putative defensin-like protein 277 from Arabidopsis thaliana (Mouse-ear cress).